The chain runs to 325 residues: Aldo-keto reductase family 1 member A1 (325 aa).

Ala-2 carries the N-acetylalanine modification. Position 4 is a phosphoserine (Ser-4). Residues 11 to 20, Thr-21, and Trp-22 contribute to the NADP(+) site; that span reads GQKMPLIGLG. Ser-38 is modified (phosphoserine). Asp-45 contributes to the NADP(+) binding site. Residue Tyr-50 is the Proton donor of the active site. The residue at position 127 (Lys-127) is an N6-acetyllysine; alternate. The residue at position 127 (Lys-127) is an N6-succinyllysine; alternate. The residue at position 145 (Lys-145) is an N6-succinyllysine. Residues Ser-162, Asn-163, Ser-211, Leu-213, Ser-215, Ser-216, Lys-263, Ser-264, Ile-265, Thr-266, Arg-269, Gln-272, and Asn-273 each coordinate NADP(+). Ser-211 is subject to Phosphoserine.

The protein belongs to the aldo/keto reductase family. As to quaternary structure, monomer. As to expression, widely expressed. Highly expressed in kidney, salivary gland and liver. Detected in trachea, stomach, brain, lung, prostate, placenta, mammary gland, small intestine and lung.

It is found in the cytoplasm. The protein resides in the cytosol. It localises to the apical cell membrane. It catalyses the reaction a primary alcohol + NADP(+) = an aldehyde + NADPH + H(+). The catalysed reaction is allyl alcohol + NADP(+) = acrolein + NADPH + H(+). The enzyme catalyses glycerol + NADP(+) = D-glyceraldehyde + NADPH + H(+). It carries out the reaction glycerol + NADP(+) = L-glyceraldehyde + NADPH + H(+). It catalyses the reaction hydroxyacetone + NADP(+) = methylglyoxal + NADPH + H(+). The catalysed reaction is a 4-hydroxynonen-1-ol + NADP(+) = a 4-hydroxynonenal + NADPH + H(+). The enzyme catalyses 3-deoxyfructose + NADP(+) = 3-deoxyglucosone + NADPH + H(+). It carries out the reaction L-gulonate + NADP(+) = aldehydo-D-glucuronate + NADPH + H(+). It catalyses the reaction L-gulono-1,4-lactone + NADP(+) = D-glucurono-3,6-lactone + NADPH + H(+). The catalysed reaction is pyridine 3-methanol + NADP(+) = pyridine-3-carbaldehyde + NADPH + H(+). The enzyme catalyses S-nitroso-CoA + NADPH + H(+) = sulfinamide-CoA + NADP(+). It carries out the reaction S-nitrosoglutathione + NADPH + H(+) = S-(hydroxysulfenamide)glutathione + NADP(+). Functionally, catalyzes the NADPH-dependent reduction of a wide variety of carbonyl-containing compounds to their corresponding alcohols. Displays enzymatic activity towards endogenous metabolites such as aromatic and aliphatic aldehydes, ketones, monosaccharides and bile acids, with a preference for negatively charged substrates, such as glucuronate and succinic semialdehyde. Functions as a detoxifiying enzyme by reducing a range of toxic aldehydes. Reduces methylglyoxal and 3-deoxyglucosone, which are present at elevated levels under hyperglycemic conditions and are cytotoxic. Involved also in the detoxification of lipid-derived aldehydes like acrolein. Plays a role in the activation of procarcinogens, such as polycyclic aromatic hydrocarbon trans-dihydrodiols, and in the metabolism of various xenobiotics and drugs, including the anthracyclines doxorubicin (DOX) and daunorubicin (DAUN). Also acts as an inhibitor of protein S-nitrosylation by mediating degradation of S-nitroso-coenzyme A (S-nitroso-CoA), a cofactor required to S-nitrosylate proteins. S-nitroso-CoA reductase activity is involved in reprogramming intermediary metabolism in renal proximal tubules, notably by inhibiting protein S-nitrosylation of isoform 2 of PKM (PKM2). Also acts as a S-nitroso-glutathione reductase by catalyzing the NADPH-dependent reduction of S-nitrosoglutathione. Displays no reductase activity towards retinoids. This Homo sapiens (Human) protein is Aldo-keto reductase family 1 member A1 (AKR1A1).